Here is a 237-residue protein sequence, read N- to C-terminus: MQTNDPVFAGWDGSVIQARQLQRQLARRVVLDDAVSATPQLLAGFDVGFEDDGQTTRAAAVLLDAQTLLPLETHIARVPTSMPYVPGLLSFRELPALLQALALLSRTPDLVFIDGQGIAHPRKLGIAAHFGVVTGLPCIGIAKQRLAGSFAEPGPERGDHTPILLGGSQIGWALRSKPRCNPLIVSPGHRVSMQGALDWTLRTLRAYRLPEPTRLADRLASRRGEVTVPAGYSGHLL.

Residues D46 and D114 each contribute to the Mg(2+) site.

The protein belongs to the endonuclease V family. Mg(2+) is required as a cofactor.

The protein localises to the cytoplasm. It carries out the reaction Endonucleolytic cleavage at apurinic or apyrimidinic sites to products with a 5'-phosphate.. In terms of biological role, DNA repair enzyme involved in the repair of deaminated bases. Selectively cleaves double-stranded DNA at the second phosphodiester bond 3' to a deoxyinosine leaving behind the intact lesion on the nicked DNA. This is Endonuclease V from Xanthomonas axonopodis pv. citri (strain 306).